The sequence spans 237 residues: Ribitol-5-phosphate cytidylyltransferase (237 aa).

Residues 7–10 (LAGG) and 80–86 (GEDRNET) each bind CTP.

The protein belongs to the IspD/TarI cytidylyltransferase family. TarI subfamily.

It catalyses the reaction D-ribitol 5-phosphate + CTP + H(+) = CDP-L-ribitol + diphosphate. Its pathway is cell wall biogenesis; poly(ribitol phosphate) teichoic acid biosynthesis. Its function is as follows. Catalyzes the transfer of the cytidylyl group of CTP to D-ribitol 5-phosphate. This chain is Ribitol-5-phosphate cytidylyltransferase, found in Listeria monocytogenes serotype 4b (strain F2365).